The sequence spans 583 residues: 2-succinyl-5-enolpyruvyl-6-hydroxy-3-cyclohexene-1-carboxylate synthase (583 aa).

The protein belongs to the TPP enzyme family. MenD subfamily. Homodimer. It depends on Mg(2+) as a cofactor. Requires Mn(2+) as cofactor. The cofactor is thiamine diphosphate.

The enzyme catalyses isochorismate + 2-oxoglutarate + H(+) = 5-enolpyruvoyl-6-hydroxy-2-succinyl-cyclohex-3-ene-1-carboxylate + CO2. It functions in the pathway quinol/quinone metabolism; 1,4-dihydroxy-2-naphthoate biosynthesis; 1,4-dihydroxy-2-naphthoate from chorismate: step 2/7. The protein operates within quinol/quinone metabolism; menaquinone biosynthesis. Its function is as follows. Catalyzes the thiamine diphosphate-dependent decarboxylation of 2-oxoglutarate and the subsequent addition of the resulting succinic semialdehyde-thiamine pyrophosphate anion to isochorismate to yield 2-succinyl-5-enolpyruvyl-6-hydroxy-3-cyclohexene-1-carboxylate (SEPHCHC). This Roseiflexus sp. (strain RS-1) protein is 2-succinyl-5-enolpyruvyl-6-hydroxy-3-cyclohexene-1-carboxylate synthase.